Reading from the N-terminus, the 466-residue chain is Argininosuccinate lyase (466 aa).

The protein belongs to the lyase 1 family. Argininosuccinate lyase subfamily.

It is found in the cytoplasm. The catalysed reaction is 2-(N(omega)-L-arginino)succinate = fumarate + L-arginine. The protein operates within amino-acid biosynthesis; L-arginine biosynthesis; L-arginine from L-ornithine and carbamoyl phosphate: step 3/3. The polypeptide is Argininosuccinate lyase (Synechococcus sp. (strain ATCC 27144 / PCC 6301 / SAUG 1402/1) (Anacystis nidulans)).